A 668-amino-acid polypeptide reads, in one-letter code: Cyclin-dependent kinase 11.2 (668 aa).

The segment at 1–265 (MSNYSTNGSR…EQWESMTENE (265 aa)) is disordered. 3 stretches are compositionally biased toward basic and acidic residues: residues 35-73 (KTKE…DHRD), 85-127 (YCRD…DSLR), and 140-163 (LPDD…KTVM). Residues 164-181 (EVEDVEMSPVEMLDEEEV) are compositionally biased toward acidic residues. Basic and acidic residues-rich tracts occupy residues 197–212 (NEPE…DPES) and 245–265 (PDDK…TENE). One can recognise a Protein kinase domain in the interval 304–600 (YVILNVIAEG…ASEALQHDWF (297 aa)). ATP-binding positions include 310–318 (IAEGTYGEV) and K333. The Proton acceptor role is filled by D432.

Belongs to the protein kinase superfamily. CMGC Ser/Thr protein kinase family. CDC2/CDKX subfamily. Expressed in somatic cells and at varying levels throughout the germline (at protein level). Highly expressed in the germ line of hermaphrodites (at protein level).

The protein localises to the nucleus. It localises to the cytoplasm. The catalysed reaction is L-seryl-[protein] + ATP = O-phospho-L-seryl-[protein] + ADP + H(+). It carries out the reaction L-threonyl-[protein] + ATP = O-phospho-L-threonyl-[protein] + ADP + H(+). Its function is as follows. Probable cyclin-dependent kinase whose activity is most likely regulated by the cyclin cyl-1/Cylin-L. Acts partially redundantly with cdk-11.1 to ensure embryonic viability. In contrast to cdk-11.1, not essential for male and female fertility. In Caenorhabditis elegans, this protein is Cyclin-dependent kinase 11.2.